The primary structure comprises 290 residues: 4-hydroxy-tetrahydrodipicolinate synthase (290 aa).

Threonine 44 is a binding site for pyruvate. Tyrosine 132 functions as the Proton donor/acceptor in the catalytic mechanism. Catalysis depends on lysine 160, which acts as the Schiff-base intermediate with substrate. Position 202 (isoleucine 202) interacts with pyruvate.

This sequence belongs to the DapA family. Homotetramer; dimer of dimers.

It localises to the cytoplasm. It carries out the reaction L-aspartate 4-semialdehyde + pyruvate = (2S,4S)-4-hydroxy-2,3,4,5-tetrahydrodipicolinate + H2O + H(+). Its pathway is amino-acid biosynthesis; L-lysine biosynthesis via DAP pathway; (S)-tetrahydrodipicolinate from L-aspartate: step 3/4. Catalyzes the condensation of (S)-aspartate-beta-semialdehyde [(S)-ASA] and pyruvate to 4-hydroxy-tetrahydrodipicolinate (HTPA). The protein is 4-hydroxy-tetrahydrodipicolinate synthase of Geobacter metallireducens (strain ATCC 53774 / DSM 7210 / GS-15).